Consider the following 191-residue polypeptide: Ribonuclease HII (191 aa).

Residues 7-191 (ILMAGVDEVG…YSPVADLISK (185 aa)) form the RNase H type-2 domain. Positions 13, 14, and 103 each coordinate a divalent metal cation.

It belongs to the RNase HII family. The cofactor is Mn(2+). Mg(2+) is required as a cofactor.

The protein resides in the cytoplasm. The catalysed reaction is Endonucleolytic cleavage to 5'-phosphomonoester.. Endonuclease that specifically degrades the RNA of RNA-DNA hybrids. The sequence is that of Ribonuclease HII from Legionella pneumophila (strain Corby).